Reading from the N-terminus, the 1415-residue chain is DNA-directed RNA polymerase subunit beta'' (1415 aa).

Positions 217, 291, 298, and 301 each coordinate Zn(2+).

Belongs to the RNA polymerase beta' chain family. RpoC2 subfamily. In plastids the minimal PEP RNA polymerase catalytic core is composed of four subunits: alpha, beta, beta', and beta''. When a (nuclear-encoded) sigma factor is associated with the core the holoenzyme is formed, which can initiate transcription. Zn(2+) is required as a cofactor.

It localises to the plastid. Its subcellular location is the chloroplast. It carries out the reaction RNA(n) + a ribonucleoside 5'-triphosphate = RNA(n+1) + diphosphate. In terms of biological role, DNA-dependent RNA polymerase catalyzes the transcription of DNA into RNA using the four ribonucleoside triphosphates as substrates. This is DNA-directed RNA polymerase subunit beta'' from Phaeodactylum tricornutum (strain CCAP 1055/1).